Consider the following 527-residue polypeptide: 2-isopropylmalate synthase (527 aa).

Residues I18–V280 form the Pyruvate carboxyltransferase domain. Mn(2+) contacts are provided by D27, H215, H217, and N251. The regulatory domain stretch occupies residues T405–P527.

This sequence belongs to the alpha-IPM synthase/homocitrate synthase family. LeuA type 1 subfamily. In terms of assembly, homodimer. Mn(2+) serves as cofactor.

Its subcellular location is the cytoplasm. The catalysed reaction is 3-methyl-2-oxobutanoate + acetyl-CoA + H2O = (2S)-2-isopropylmalate + CoA + H(+). It functions in the pathway amino-acid biosynthesis; L-leucine biosynthesis; L-leucine from 3-methyl-2-oxobutanoate: step 1/4. Its function is as follows. Catalyzes the condensation of the acetyl group of acetyl-CoA with 3-methyl-2-oxobutanoate (2-ketoisovalerate) to form 3-carboxy-3-hydroxy-4-methylpentanoate (2-isopropylmalate). The chain is 2-isopropylmalate synthase from Rhodopirellula baltica (strain DSM 10527 / NCIMB 13988 / SH1).